The primary structure comprises 138 residues: Nuclear membrane organization protein APQ12 (138 aa).

The Cytoplasmic segment spans residues 1-39; that stretch reads MDATQPQYELSVVTQCLKSAIDVIQWLIPTITKFSQSHP. A helical transmembrane segment spans residues 40–58; it reads LVFQLLFIFFTFYVFYKLL. Residues 59–67 are Perinuclear space-facing; the sequence is MNFITLVKR. Residues 68–84 traverse the membrane as a helical segment; sequence FLYLTLVVTCIGIYMRG. Residues 85–138 are Cytoplasmic-facing; it reads SQQFLTVDLLNFYNFVMSNRYYAFKIYTLFINALEREINTVYHLAQMKMEQLLK.

It belongs to the APQ12 family.

The protein resides in the nucleus membrane. It is found in the endoplasmic reticulum membrane. Its function is as follows. Involved in the regulation of lipid homeostasis in the endoplasmic reticulum, thereby impacting nuclear pore complex biogenesis and localization, and nucleocytoplasmic mRNA transport. This chain is Nuclear membrane organization protein APQ12 (APQ12), found in Saccharomyces cerevisiae (strain ATCC 204508 / S288c) (Baker's yeast).